A 180-amino-acid polypeptide reads, in one-letter code: ATP synthase subunit delta (180 aa).

Belongs to the ATPase delta chain family. As to quaternary structure, F-type ATPases have 2 components, F(1) - the catalytic core - and F(0) - the membrane proton channel. F(1) has five subunits: alpha(3), beta(3), gamma(1), delta(1), epsilon(1). F(0) has three main subunits: a(1), b(2) and c(10-14). The alpha and beta chains form an alternating ring which encloses part of the gamma chain. F(1) is attached to F(0) by a central stalk formed by the gamma and epsilon chains, while a peripheral stalk is formed by the delta and b chains.

It localises to the cell inner membrane. Its function is as follows. F(1)F(0) ATP synthase produces ATP from ADP in the presence of a proton or sodium gradient. F-type ATPases consist of two structural domains, F(1) containing the extramembraneous catalytic core and F(0) containing the membrane proton channel, linked together by a central stalk and a peripheral stalk. During catalysis, ATP synthesis in the catalytic domain of F(1) is coupled via a rotary mechanism of the central stalk subunits to proton translocation. Functionally, this protein is part of the stalk that links CF(0) to CF(1). It either transmits conformational changes from CF(0) to CF(1) or is implicated in proton conduction. The sequence is that of ATP synthase subunit delta from Anaplasma phagocytophilum (strain HZ).